A 318-amino-acid chain; its full sequence is Malate dehydrogenase (318 aa).

NAD(+) is bound by residues 11–17 (GAGGNVG) and D37. The substrate site is built by R86 and R92. NAD(+) contacts are provided by residues N99 and 122–124 (VTN). Substrate-binding residues include N124 and R155. H179 functions as the Proton acceptor in the catalytic mechanism.

This sequence belongs to the LDH/MDH superfamily. MDH type 3 family.

The catalysed reaction is (S)-malate + NAD(+) = oxaloacetate + NADH + H(+). In terms of biological role, catalyzes the reversible oxidation of malate to oxaloacetate. The polypeptide is Malate dehydrogenase (Nitratiruptor sp. (strain SB155-2)).